The following is a 170-amino-acid chain: Zinc finger protein 576 (170 aa).

Positions 1-29 are disordered; that stretch reads MEDPNPEENMKQQDSPKERSPQSPGGNIC. Residues 8–20 are compositionally biased toward basic and acidic residues; it reads ENMKQQDSPKERS. 4 consecutive C2H2-type zinc fingers follow at residues 34 to 57, 71 to 93, 112 to 134, and 143 to 165; these read PKCT…KREH, FICF…QRSH, FPCP…RQMH, and FACT…YIRH.

The protein belongs to the krueppel C2H2-type zinc-finger protein family.

Its subcellular location is the nucleus. Functionally, may be involved in transcriptional regulation. In Homo sapiens (Human), this protein is Zinc finger protein 576 (ZNF576).